Here is a 1048-residue protein sequence, read N- to C-terminus: Probable beta-glucosidase E (1048 aa).

The interval 1-54 (MPPPPFRDAPSSAKSSQRYTPLHESIPEELNDKQYSSDADSLPLSDPSDGEDDS) is disordered. Over 1–150 (MPPPPFRDAP…WRTVYYSKYW (150 aa)) the chain is Cytoplasmic. Positions 36-47 (SSDADSLPLSDP) are enriched in low complexity. The chain crosses the membrane as a helical; Signal-anchor for type II membrane protein span at residues 151-171 (WRALIGVVVVLVLLVLVFLGL). Topologically, residues 172-1048 (ARSKQVGDEL…SRDLPLHGKY (877 aa)) are extracellular. 3 N-linked (GlcNAc...) asparagine glycosylation sites follow: N216, N224, and N410. D438 is a catalytic residue. N-linked (GlcNAc...) asparagine glycosylation is found at N481, N520, N578, N895, and N991. Positions 508-527 (WERPPPDGEGGPNFSSWTDD) are disordered.

The protein belongs to the glycosyl hydrolase 3 family.

Its subcellular location is the cell membrane. It catalyses the reaction Hydrolysis of terminal, non-reducing beta-D-glucosyl residues with release of beta-D-glucose.. The protein operates within glycan metabolism; cellulose degradation. In terms of biological role, beta-glucosidases are one of a number of cellulolytic enzymes involved in the degradation of cellulosic biomass. Catalyzes the last step releasing glucose from the inhibitory cellobiose. The sequence is that of Probable beta-glucosidase E (bglE) from Aspergillus oryzae (strain ATCC 42149 / RIB 40) (Yellow koji mold).